The primary structure comprises 330 residues: MKQLVCVLFVCSSAVTQLHKDPTLDHHWNLWKKTYGKQYKEKNEEAVRRLIWEKNLKFVMLHNLEHSMGMHSYDLGMNHLGDMTSEEVMSLMSSLRVPNQWQRNITYKSNPNQMLPDSVDWREKGCVTEVKYQGSCGACWAFSAVGALEAQLKLKTGKLVSLSAQNLVDCSEKYGNKGCNGGFMTEAFQYIIDNKGIDSEASYPYKATDQKCQYDSKYRAATCSKYTELPYGREDVLKEAVANKGPVCVGVDASHPSFFLYRSGVYYDPACTQKVNHGVLVIGYGDLNGKEYWLVKNSWGSNFGEQGYIRMARNKGNHCGIASYPSYPEI.

An N-terminal signal peptide occupies residues 1–17; the sequence is MKQLVCVLFVCSSAVTQ. Residues 18-114 constitute a propeptide, activation peptide; the sequence is LHKDPTLDHH…ITYKSNPNQM (97 aa). Asn-104 carries N-linked (GlcNAc...) asparagine glycosylation. Disulfide bonds link Cys-126–Cys-223, Cys-136–Cys-179, Cys-170–Cys-212, and Cys-271–Cys-319. Cys-139 is an active-site residue. Catalysis depends on residues His-277 and Asn-297.

It belongs to the peptidase C1 family.

It is found in the lysosome. The protein localises to the secreted. The protein resides in the cytoplasmic vesicle. Its subcellular location is the phagosome. It carries out the reaction Similar to cathepsin L, but with much less activity on Z-Phe-Arg-|-NHMec, and more activity on the Z-Val-Val-Arg-|-Xaa compound.. In terms of biological role, thiol protease. Key protease responsible for the removal of the invariant chain from MHC class II molecules and MHC class II antigen presentation. The bond-specificity of this proteinase is in part similar to the specificities of cathepsin L. This chain is Cathepsin S (CTSS), found in Saimiri boliviensis boliviensis (Bolivian squirrel monkey).